Reading from the N-terminus, the 32-residue chain is Peptide II.10.10 (32 aa).

Intrachain disulfides connect Cys5–Cys24, Cys10–Cys29, and Cys14–Cys31.

This sequence belongs to the short scorpion toxin superfamily. Potassium channel inhibitor family. Alpha-KTx 10 subfamily. In terms of tissue distribution, expressed by the venom gland.

Its subcellular location is the secreted. The polypeptide is Peptide II.10.10 (Centruroides tecomanus (Scorpion)).